The following is a 200-amino-acid chain: Beta-1,6-glucan synthesis-associated protein KEG1 (200 aa).

Residues 1–15 (MAGIKLTHKLYQYYQ) lie on the Lumenal side of the membrane. A helical membrane pass occupies residues 16 to 36 (LATSFLYAALLIRWLILMPLV). Over 37–44 (GSRFLPGG) the chain is Cytoplasmic. A helical transmembrane segment spans residues 45–65 (IHEFLIYLMFYSSIMEVIWLL). The Lumenal segment spans residues 66 to 82 (RFHGFKYGLLSRTFLKD). The chain crosses the membrane as a helical span at residues 83 to 103 (LNFIYLVSVIHFYDDYEHALI). The Cytoplasmic segment spans residues 104 to 145 (LKNASYSSFIISLSLSQAYCHWCKLFKRKGVKERTLVWKVNT). The helical transmembrane segment at 146–166 (FVTLPILYLSEFALLLLNIQV) threads the bilayer. Residues 167 to 173 (KNYHSTP) are Lumenal-facing. Residues 174-194 (TLDIINRVVLLAYFPVLLTAY) form a helical membrane-spanning segment. The Cytoplasmic portion of the chain corresponds to 195–200 (KKLLTK).

Interacts with KRE6.

It localises to the endoplasmic reticulum membrane. In terms of biological role, involved in the biosynthesis of (1-&gt;6)-beta-D-glucan polymers of the cell wall. Required for viability. Involved in maintaining chromosome stability. The polypeptide is Beta-1,6-glucan synthesis-associated protein KEG1 (KEG1) (Saccharomyces cerevisiae (strain ATCC 204508 / S288c) (Baker's yeast)).